The primary structure comprises 165 residues: Lipoprotein signal peptidase (165 aa).

Helical transmembrane passes span 9–29 (LLTI…VLLY), 69–89 (KYFL…FLFL), and 100–120 (FSLI…FFYN). Residues aspartate 124 and aspartate 142 contribute to the active site. Residues 133 to 153 (WSFPTFNFADIFISLGTLIFV) form a helical membrane-spanning segment.

It belongs to the peptidase A8 family.

Its subcellular location is the cell inner membrane. The catalysed reaction is Release of signal peptides from bacterial membrane prolipoproteins. Hydrolyzes -Xaa-Yaa-Zaa-|-(S,diacylglyceryl)Cys-, in which Xaa is hydrophobic (preferably Leu), and Yaa (Ala or Ser) and Zaa (Gly or Ala) have small, neutral side chains.. It functions in the pathway protein modification; lipoprotein biosynthesis (signal peptide cleavage). In terms of biological role, this protein specifically catalyzes the removal of signal peptides from prolipoproteins. The sequence is that of Lipoprotein signal peptidase from Chlamydia felis (strain Fe/C-56) (Chlamydophila felis).